Here is a 786-residue protein sequence, read N- to C-terminus: Polyribonucleotide nucleotidyltransferase (786 aa).

Mg(2+) is bound by residues Asp-516 and Asp-522. The KH domain occupies 582–641; it reads PRVTTVKIPVDKIGMVIGPKGQTINAIQDETGAEISIEDDGTIYVGATNGPSAQAAVERV. An S1 motif domain is found at 653 to 722; it reads GDRFLGTVVK…QRGKIYLDKV (70 aa). The segment at 722–786 is disordered; sequence VRPEGAEGPA…SRPRRRTRHS (65 aa). The span at 727–738 shows a compositional bias: low complexity; sequence AEGPAEAAATDR. Basic and acidic residues predominate over residues 739 to 778; that stretch reads PAGRDRGDRAPRDRGDRGDRERGSRGPDRGDGGEGGGESR.

This sequence belongs to the polyribonucleotide nucleotidyltransferase family. Mg(2+) serves as cofactor.

The protein localises to the cytoplasm. It catalyses the reaction RNA(n+1) + phosphate = RNA(n) + a ribonucleoside 5'-diphosphate. In terms of biological role, involved in mRNA degradation. Catalyzes the phosphorolysis of single-stranded polyribonucleotides processively in the 3'- to 5'-direction. The chain is Polyribonucleotide nucleotidyltransferase from Salinispora arenicola (strain CNS-205).